The primary structure comprises 489 residues: Probable apyrase 1 (489 aa).

The Cytoplasmic portion of the chain corresponds to 1–28 (MRRFSAAAGARQQQQQGEAVSDRVLRFR). A helical; Signal-anchor for type II membrane protein transmembrane segment spans residues 29–49 (GVLVVVLAPVLLISLVLLLMP). Topologically, residues 50-489 (RAPASATVEG…GSAIEVASSS (440 aa)) are extracellular. 89 to 99 (VIFDAGSSGSR) serves as a coordination point for ATP. Catalysis depends on Glu-211, which acts as the Proton acceptor. Position 235 to 245 (235 to 245 (GVVDLGGGSVQ)) interacts with ATP.

This sequence belongs to the GDA1/CD39 NTPase family. It depends on Ca(2+) as a cofactor.

The protein resides in the membrane. It carries out the reaction a ribonucleoside 5'-triphosphate + 2 H2O = a ribonucleoside 5'-phosphate + 2 phosphate + 2 H(+). Catalyzes the hydrolysis of phosphoanhydride bonds of nucleoside tri- and di-phosphates. This is Probable apyrase 1 (APY1) from Oryza sativa subsp. japonica (Rice).